A 241-amino-acid polypeptide reads, in one-letter code: Sugar fermentation stimulation protein homolog (241 aa).

This sequence belongs to the SfsA family.

The chain is Sugar fermentation stimulation protein homolog from Halorhodospira halophila (strain DSM 244 / SL1) (Ectothiorhodospira halophila (strain DSM 244 / SL1)).